A 755-amino-acid chain; its full sequence is Xaa-Pro dipeptidyl-peptidase (755 aa).

Active-site charge relay system residues include Ser-348, Asp-468, and His-498.

The protein belongs to the peptidase S15 family. Homodimer.

Its subcellular location is the cytoplasm. The enzyme catalyses Hydrolyzes Xaa-Pro-|- bonds to release unblocked, N-terminal dipeptides from substrates including Ala-Pro-|-p-nitroanilide and (sequentially) Tyr-Pro-|-Phe-Pro-|-Gly-Pro-|-Ile.. Its function is as follows. Removes N-terminal dipeptides sequentially from polypeptides having unsubstituted N-termini provided that the penultimate residue is proline. The polypeptide is Xaa-Pro dipeptidyl-peptidase (Streptococcus thermophilus (strain ATCC BAA-491 / LMD-9)).